The primary structure comprises 189 residues: Calcyphosin (189 aa).

4 consecutive EF-hand domains span residues 21-56 (SGIQ…LGLV), 57-92 (LDTA…PMSQ), 93-128 (AREA…RTHP), and 136-172 (TEEQ…VSAS). 14 residues coordinate Ca(2+): D34, D36, S38, S40, E45, D70, D72, S74, T76, E81, D106, S108, D110, and D117. A Phosphoserine; by PKA modification is found at S40.

In terms of assembly, monomer. Does not form oligomers in the presence of calcium.

It is found in the cytoplasm. Its function is as follows. Calcium-binding protein. May play a role in cellular signaling events (Potential). The polypeptide is Calcyphosin (CAPS) (Bos taurus (Bovine)).